The chain runs to 336 residues: Dihydroorotate dehydrogenase (quinone) (336 aa).

FMN-binding positions include Ala62–Lys66 and Thr86. Lys66 lines the substrate pocket. Residue Asn111–Phe115 coordinates substrate. Residues Asn139 and Asn172 each contribute to the FMN site. Asn172 lines the substrate pocket. Residue Ser175 is the Nucleophile of the active site. A substrate-binding site is contributed by Asn177. The FMN site is built by Lys217 and Thr245. Substrate is bound at residue Asn246–Thr247. FMN contacts are provided by residues Gly268, Gly297, and Tyr318–Ser319.

This sequence belongs to the dihydroorotate dehydrogenase family. Type 2 subfamily. In terms of assembly, monomer. Requires FMN as cofactor.

It localises to the cell membrane. The enzyme catalyses (S)-dihydroorotate + a quinone = orotate + a quinol. The protein operates within pyrimidine metabolism; UMP biosynthesis via de novo pathway; orotate from (S)-dihydroorotate (quinone route): step 1/1. Its function is as follows. Catalyzes the conversion of dihydroorotate to orotate with quinone as electron acceptor. This Escherichia fergusonii (strain ATCC 35469 / DSM 13698 / CCUG 18766 / IAM 14443 / JCM 21226 / LMG 7866 / NBRC 102419 / NCTC 12128 / CDC 0568-73) protein is Dihydroorotate dehydrogenase (quinone).